The chain runs to 478 residues: Probable cytosol aminopeptidase (478 aa).

Positions 244 and 249 each coordinate Mn(2+). Residue K256 is part of the active site. Residues D267, D326, and E328 each contribute to the Mn(2+) site. R330 is an active-site residue.

It belongs to the peptidase M17 family. Mn(2+) serves as cofactor.

The protein resides in the cytoplasm. It carries out the reaction Release of an N-terminal amino acid, Xaa-|-Yaa-, in which Xaa is preferably Leu, but may be other amino acids including Pro although not Arg or Lys, and Yaa may be Pro. Amino acid amides and methyl esters are also readily hydrolyzed, but rates on arylamides are exceedingly low.. The catalysed reaction is Release of an N-terminal amino acid, preferentially leucine, but not glutamic or aspartic acids.. Presumably involved in the processing and regular turnover of intracellular proteins. Catalyzes the removal of unsubstituted N-terminal amino acids from various peptides. The protein is Probable cytosol aminopeptidase of Fusobacterium nucleatum subsp. nucleatum (strain ATCC 25586 / DSM 15643 / BCRC 10681 / CIP 101130 / JCM 8532 / KCTC 2640 / LMG 13131 / VPI 4355).